Here is a 2057-residue protein sequence, read N- to C-terminus: Protein TIC 214 (2057 aa).

Transmembrane regions (helical) follow at residues lysine 13–isoleucine 33, leucine 62–leucine 82, leucine 158–phenylalanine 178, and serine 206–glycine 226. Positions leucine 248–serine 340 form a coiled coil. Residues asparagine 288–threonine 302 show a composition bias toward basic residues. 5 disordered regions span residues asparagine 288–threonine 316, glutamate 614–glycine 807, aspartate 890–valine 910, glutamate 1597–aspartate 1634, and lysine 1724–serine 1817. Composition is skewed to basic and acidic residues over residues alanine 621–lysine 657 and asparagine 665–lysine 702. The segment covering asparagine 704 to asparagine 713 has biased composition (polar residues). Basic and acidic residues-rich tracts occupy residues lysine 714–glycine 807 and glutamate 891–lysine 900. The span at glutamate 1597–isoleucine 1619 shows a compositional bias: acidic residues. Polar residues predominate over residues serine 1622–aspartate 1634. A compositionally biased stretch (basic and acidic residues) spans threonine 1753 to serine 1817.

Belongs to the TIC214 family. Part of the Tic complex.

The protein localises to the plastid. It localises to the chloroplast inner membrane. Involved in protein precursor import into chloroplasts. May be part of an intermediate translocation complex acting as a protein-conducting channel at the inner envelope. This is Protein TIC 214 from Ipomoea purpurea (Common morning glory).